Reading from the N-terminus, the 383-residue chain is Odorant receptor 94b (383 aa).

The Cytoplasmic segment spans residues 1-41; that stretch reads MESTNRLSAIQTLLVIQRWIGLLKWENEGEDGVLTWLKRIY. The helical transmembrane segment at 42-62 threads the bilayer; it reads PFVLHLPLTFTYIALMWYEAI. At 63–70 the chain is on the extracellular side; it reads TSSDFEEA. A helical transmembrane segment spans residues 71–91; it reads GQVLYMSITELALVTKLLNIW. The Cytoplasmic segment spans residues 92–130; the sequence is YRRHEAASLIHELQHDPAFNLRNSEEIKFWQQNQRNFKR. A helical transmembrane segment spans residues 131–151; that stretch reads IFYWYIWGSLFVAVMGYISVF. Residues 152 to 174 lie on the Extracellular side of the membrane; sequence FQEDYELPFGYYVPFEWRTRERY. A helical membrane pass occupies residues 175–195; sequence FYAWGYNVVAMTLCCLSNILL. The Cytoplasmic portion of the chain corresponds to 196-250; sequence DTLGCYFMFHIASLFRLLGMRLEALKNAAEEKARPELRRIFQLHTKVRRLTRECE. The helical transmembrane segment at 251-271 threads the bilayer; the sequence is VLVSPYVLSQVVFSAFIICFS. Residues 272–284 lie on the Extracellular side of the membrane; it reads AYRLVHMGFKQRP. The helical transmembrane segment at 285 to 305 threads the bilayer; that stretch reads GLFVTTVQFVAVMIVQIFLPC. Topologically, residues 306–358 are cytoplasmic; that stretch reads YYGNELTFHANALTNSVFGTNWLEYSVGTRKLLNCYMEFLKRPVKVRAGVFFE. The helical transmembrane segment at 359-379 threads the bilayer; sequence IGLPIFVKTINNAYSFFALLL. Residues 380–383 are Extracellular-facing; the sequence is KISK.

The protein belongs to the insect chemoreceptor superfamily. Heteromeric odorant receptor channel (TC 1.A.69) family. Or2a subfamily. As to quaternary structure, interacts with Orco. Complexes exist early in the endomembrane system in olfactory sensory neurons (OSNs), coupling these complexes to the conserved ciliary trafficking pathway.

The protein localises to the cell membrane. Its function is as follows. Odorant receptor which mediates acceptance or avoidance behavior, depending on its substrates. The odorant receptor repertoire encodes a large collection of odor stimuli that vary widely in identity, intensity, and duration. May form a complex with Orco to form odorant-sensing units, providing sensitive and prolonged odorant signaling and calcium permeability. This chain is Odorant receptor 94b (Or94b), found in Drosophila melanogaster (Fruit fly).